The primary structure comprises 249 residues: MAERGELDLTGAKQNTGVWLVKVPKYLSQQWAKASGRGEVGKLRIAKTQGRTEVSFTLNEDLANIHDIGGKPASVSAPREHPFVLQSVGGQTLTVFTESSSDKLSLEGIVVQRAECRPAASENYMRLKRLQIEESSKPVRLSQQLDKVVTTNYKPVANHQYNIEYERKKKEDGKRARADKQHVLDMLFSAFEKHQYYNLKDLVDITKQPVVYLKEILKEIGVQNVKGIHKNTWELKPEYRHYQGEEKSD.

Alanine 2 carries the N-acetylalanine modification. Residues lysine 22, lysine 33, and lysine 137 each carry the N6-acetyllysine modification. Serine 142 is modified (phosphoserine). DNA-binding residues include glycine 227 and histidine 229. Serine 248 is subject to Phosphoserine.

This sequence belongs to the TFIIF beta subunit family. Heterodimer of an alpha and a beta subunit. Interacts with HTATSF1 and GPBP1. Interacts with URI1. Interacts with GTF2B (via N-terminus); this interaction is inhibited in presence of GTF2F1. Part of TBP-based Pol II pre-initiation complex (PIC), in which Pol II core assembles with general transcription factors and other specific initiation factors including GTF2E1, GTF2E2, GTF2F1, GTF2F2, TCEA1, ERCC2, ERCC3, GTF2H2, GTF2H3, GTF2H4, GTF2H5, GTF2A1, GTF2A2, GTF2B and TBP; this large multi-subunit PIC complex mediates DNA unwinding and targets Pol II core to the transcription start site where the first phosphodiester bond forms.

Its subcellular location is the nucleus. TFIIF is a general transcription initiation factor that binds to RNA polymerase II and helps to recruit it to the initiation complex in collaboration with TFIIB. In Homo sapiens (Human), this protein is General transcription factor IIF subunit 2 (GTF2F2).